A 457-amino-acid chain; its full sequence is MNVIHINFKMKSREYSKLFGCNIYGFIRVTSMAQKIIDTSEFQRLRNMKQLGLCYLVFPAATHTRLEHSIGVYDRTRKVIERIYRQYPDREYYIPELSDKPIKLDAKIIECIKIAGLCHDIGHGPFSHVFDDVLLTDIDHPNKHHEIRSCLITEIICKRELSNELNDKHIDFIKSIINPTSSHKGAIYQIVSNNLNGIDVDKFDYLARDSKNLNIGSEFNASRLINEFIIDKNNNIAYPKQCCFDIDEMYNSRYCMHKKVYSHKTVKLLEMMLKDIFTLIDPIFKISETINDMDQFCKLTDNSIFELISTTINPRPFIKINIEPDQFMAIKKANTIYQNILSRKLYKQITEINENNGGKALCEKFIEYITNKHPNIKNSLYLFKTVRGFIGGNKNPFGQIYFYDKMEDDNSFTMPECHFAGLINKGTQEVTWHIYCKDSKILDLARFEVKNFFNTLE.

An HD domain is found at 65 to 206 (RLEHSIGVYD…GIDVDKFDYL (142 aa)).

The protein is Putative HD domain-containing protein L394 of Acanthamoeba polyphaga mimivirus (APMV).